The primary structure comprises 263 residues: Probable ribosomal RNA small subunit methyltransferase A (263 aa).

S-adenosyl-L-methionine-binding residues include leucine 12, glycine 37, glutamate 58, aspartate 83, and asparagine 100.

It belongs to the class I-like SAM-binding methyltransferase superfamily. rRNA adenine N(6)-methyltransferase family. RsmA subfamily.

The protein localises to the cytoplasm. In terms of biological role, specifically dimethylates two adjacent adenosines in the loop of a conserved hairpin near the 3'-end of 16S rRNA in the 30S particle. May play a critical role in biogenesis of 30S subunits. The sequence is that of Probable ribosomal RNA small subunit methyltransferase A from Methanococcus maripaludis (strain C6 / ATCC BAA-1332).